The chain runs to 116 residues: Ribosome-binding factor A (116 aa).

This sequence belongs to the RbfA family. As to quaternary structure, monomer. Binds 30S ribosomal subunits, but not 50S ribosomal subunits or 70S ribosomes.

It is found in the cytoplasm. One of several proteins that assist in the late maturation steps of the functional core of the 30S ribosomal subunit. Associates with free 30S ribosomal subunits (but not with 30S subunits that are part of 70S ribosomes or polysomes). Required for efficient processing of 16S rRNA. May interact with the 5'-terminal helix region of 16S rRNA. The polypeptide is Ribosome-binding factor A (Clostridium botulinum (strain Eklund 17B / Type B)).